The sequence spans 360 residues: Phospho-N-acetylmuramoyl-pentapeptide-transferase (360 aa).

The next 10 membrane-spanning stretches (helical) occupy residues 21–41 (YLTL…ILIG), 73–93 (TMGG…WADL), 97–117 (YVLV…VDDY), 134–154 (YFWQ…SATM), 168–188 (VFPQ…VGTS), 199–219 (GLAI…AYVT), 239–259 (LVIV…FNTY), 263–283 (VFMG…LAVL), 288–308 (LVLI…ILQV), and 338–358 (VIVR…ATLK).

Belongs to the glycosyltransferase 4 family. MraY subfamily. Mg(2+) serves as cofactor.

It localises to the cell inner membrane. It carries out the reaction UDP-N-acetyl-alpha-D-muramoyl-L-alanyl-gamma-D-glutamyl-meso-2,6-diaminopimeloyl-D-alanyl-D-alanine + di-trans,octa-cis-undecaprenyl phosphate = di-trans,octa-cis-undecaprenyl diphospho-N-acetyl-alpha-D-muramoyl-L-alanyl-D-glutamyl-meso-2,6-diaminopimeloyl-D-alanyl-D-alanine + UMP. It participates in cell wall biogenesis; peptidoglycan biosynthesis. Its function is as follows. Catalyzes the initial step of the lipid cycle reactions in the biosynthesis of the cell wall peptidoglycan: transfers peptidoglycan precursor phospho-MurNAc-pentapeptide from UDP-MurNAc-pentapeptide onto the lipid carrier undecaprenyl phosphate, yielding undecaprenyl-pyrophosphoryl-MurNAc-pentapeptide, known as lipid I. This chain is Phospho-N-acetylmuramoyl-pentapeptide-transferase, found in Alteromonas mediterranea (strain DSM 17117 / CIP 110805 / LMG 28347 / Deep ecotype).